The sequence spans 259 residues: 7alpha-hydroxysteroid dehydrogenase (259 aa).

Residues Ile-18, 37–38, and Asn-90 each bind NAD(+); that span reads DY. Positions 145 and 158 each coordinate glycochenodeoxycholate. NAD(+)-binding positions include Tyr-158, Lys-162, and 191–193; that span reads ILT. Tyr-158 serves as the catalytic Proton acceptor.

It belongs to the short-chain dehydrogenases/reductases (SDR) family. As to quaternary structure, homotetramer.

It carries out the reaction cholate + NAD(+) = 3alpha,12alpha-dihydroxy-7-oxo-5beta-cholanate + NADH + H(+). It catalyses the reaction chenodeoxycholate + NAD(+) = 7-oxolithocholate + NADH + H(+). The catalysed reaction is taurochenodeoxycholate + NAD(+) = 7-oxotaurolithocholate + NADH + H(+). The enzyme catalyses glycochenodeoxycholate + NAD(+) = 7-oxoglycolithocholate + NADH + H(+). It carries out the reaction taurocholate + NAD(+) = 7-oxo-taurodeoxycholate + NADH + H(+). It catalyses the reaction glycocholate + NAD(+) = 7-oxo-glycodeoxycholate + NADH + H(+). The catalysed reaction is an aromatic primary alcohol + NAD(+) = an aromatic aldehyde + NADH + H(+). The enzyme catalyses benzyl alcohol + NAD(+) = benzaldehyde + NADH + H(+). It carries out the reaction 4-cyanobenzyl alcohol + NAD(+) = 4-cyanobenzaldehyde + NADH + H(+). It catalyses the reaction 4-acetoxybenzyl alcohol + NAD(+) = 4-acetoxybenzaldehyde + NADH + H(+). The catalysed reaction is 4-(trifluoromethyl)benzyl alcohol + NAD(+) = 4-(trifluoromethyl)benzaldehyde + NADH + H(+). 7alpha-hydroxysteroid dehydrogenase involved in the metabolism of bile acids in the gut. Catalyzes the NAD(+)-dependent oxidation of the 7alpha-hydroxy group of 7alpha-hydroxysteroids, such as cholate, chenodeoxycholate, taurochenodeoxycholate, glycochenodeoxycholate, taurocholate and glycocholate, to the corresponding 7-oxosteroids. Since it is also able to catalyze the reduction of nonsteroidal carbonyl compounds such as various benzaldehyde analogs to their corresponding benzyl alcohols, this enzyme may also function in the detoxification of xenobiotics containing carbonyl groups in the large intestine. This Bacteroides fragilis (strain ATCC 25285 / DSM 2151 / CCUG 4856 / JCM 11019 / LMG 10263 / NCTC 9343 / Onslow / VPI 2553 / EN-2) protein is 7alpha-hydroxysteroid dehydrogenase.